A 217-amino-acid polypeptide reads, in one-letter code: Cytokinin riboside 5'-monophosphate phosphoribohydrolase LOG7 (217 aa).

Substrate-binding positions include Glu-79, 97 to 98 (RK), 114 to 120 (GYGTLEE), and Thr-126.

The protein belongs to the LOG family. As to expression, expressed in roots and shoots. Detected in the epidermis of the root elongation zone, cotyledon and leaves, in trichomes and pollen.

The protein localises to the cytoplasm. The protein resides in the nucleus. The enzyme catalyses N(6)-(dimethylallyl)adenosine 5'-phosphate + H2O = N(6)-dimethylallyladenine + D-ribose 5-phosphate. The catalysed reaction is 9-ribosyl-trans-zeatin 5'-phosphate + H2O = trans-zeatin + D-ribose 5-phosphate. Cytokinin-activating enzyme working in the direct activation pathway. Phosphoribohydrolase that converts inactive cytokinin nucleotides to the biologically active free-base forms. The sequence is that of Cytokinin riboside 5'-monophosphate phosphoribohydrolase LOG7 (LOG7) from Arabidopsis thaliana (Mouse-ear cress).